An 85-amino-acid polypeptide reads, in one-letter code: Small integral membrane protein 2 (85 aa).

A helical transmembrane segment spans residues 21–43 (GHAISILFGFWTSFICDTYIVLA). The interval 51 to 85 (SPDVSASSDEPYARIQQSRRQCHAEEDQSQVPEAG) is disordered.

The protein localises to the membrane. The sequence is that of Small integral membrane protein 2 (SMIM2) from Homo sapiens (Human).